Reading from the N-terminus, the 942-residue chain is Protein O-mannosyl-transferase TMTC1 (942 aa).

Topologically, residues 1 to 20 (MLVTRGDRGGGERAPSRRPR) are cytoplasmic. Residues 21 to 41 (CGLVPAGAAALLAGASCLCYG) form a helical membrane-spanning segment. The Extracellular portion of the chain corresponds to 42–109 (RSLRGEFVHD…RLNIFLTGMN (68 aa)). Residues 110 to 130 (PFYFHAVNVILHCLVTLVLMY) traverse the membrane as a helical segment. Residues 131–140 (TCDKTVFKNR) are Cytoplasmic-facing. Residues 141–157 (GLAFVTALLFAVHPVHT) traverse the membrane as a helical segment. Residues 158-159 (EA) lie on the Extracellular side of the membrane. A helical transmembrane segment spans residues 160–180 (VAGIVGRADVLACLLFLLAFL). Residues 181–196 (SYQRSLDQGCAGQCFP) are Cytoplasmic-facing. A helical membrane pass occupies residues 197–217 (TTASPFFLLLSLFLGTCAMLV). The Extracellular segment spans residues 218 to 331 (KETGITVFGV…LLTLRPFLKR (114 aa)). The tract at residues 245 to 285 (NGAVCQHSSGQPGSPQPSSQQAHPHRESRKQRFPHKDSWGG) is disordered. Positions 250–266 (QHSSGQPGSPQPSSQQA) are enriched in low complexity. Residues 332–352 (AILVISYVTVILYFRLWIMGG) traverse the membrane as a helical segment. Topologically, residues 353–373 (TMPLFSEQDNPASFSPYILTR) are cytoplasmic. A helical transmembrane segment spans residues 374–394 (FLTYSYLLAFNVWLLLAPITL). Over 395–414 (CYDWQVGSIPLVETIWDVRN) the chain is Extracellular. A helical membrane pass occupies residues 415–435 (LATILLAVVMALLSLHCVAAF). Residues 436 to 441 (KRLEHK) are Cytoplasmic-facing. A helical membrane pass occupies residues 442 to 462 (EVLAGLLFLVFPFIPASNLFF). A topological domain (extracellular) is located at residue arginine 463. The chain crosses the membrane as a helical span at residues 464–484 (VGFVVAERVLYMPSMGYCILF). At 485 to 498 (VHGLSKLCAGLSRC) the chain is on the cytoplasmic side. A helical transmembrane segment spans residues 499 to 519 (GATSLMASTVLLLLLFSWKTV). Residues 520–942 (KQNEIWLSRE…LQEVRERDQT (423 aa)) are Extracellular-facing. TPR repeat units lie at residues 543–576 (AKVH…YPRH), 577–607 (ASAL…HPQH), 608–641 (NRAL…GPDF), 642–675 (ADAY…CPDS), 676–709 (SDLH…SPSH), 710–742 (HVAV…VART), 743–776 (AEVL…QPSQ), 777–810 (RELR…EPRC), 811–844 (LECY…KPKD), 849–882 (SELF…DPDQ), and 883–916 (AQAW…VPDS).

It belongs to the TMTC family. May interact with FAM168B.

It is found in the membrane. The protein localises to the endoplasmic reticulum. It carries out the reaction a di-trans,poly-cis-dolichyl beta-D-mannosyl phosphate + L-seryl-[protein] = 3-O-(alpha-D-mannosyl)-L-seryl-[protein] + a di-trans,poly-cis-dolichyl phosphate + H(+). The enzyme catalyses a di-trans,poly-cis-dolichyl beta-D-mannosyl phosphate + L-threonyl-[protein] = 3-O-(alpha-D-mannosyl)-L-threonyl-[protein] + a di-trans,poly-cis-dolichyl phosphate + H(+). The protein operates within protein modification; protein glycosylation. Functionally, transfers mannosyl residues to the hydroxyl group of serine or threonine residues. The 4 members of the TMTC family are O-mannosyl-transferases dedicated primarily to the cadherin superfamily, each member seems to have a distinct role in decorating the cadherin domains with O-linked mannose glycans at specific regions. Also acts as O-mannosyl-transferase on other proteins such as PDIA3. The chain is Protein O-mannosyl-transferase TMTC1 from Mus musculus (Mouse).